The sequence spans 382 residues: Galactokinase (382 aa).

Position 34–37 (34–37 (EHTD)) interacts with substrate. 124-130 (GAGLSSS) contributes to the ATP binding site. The Mg(2+) site is built by serine 130 and glutamate 162. Aspartate 174 serves as the catalytic Proton acceptor. Tyrosine 223 contributes to the substrate binding site.

This sequence belongs to the GHMP kinase family. GalK subfamily.

The protein resides in the cytoplasm. The enzyme catalyses alpha-D-galactose + ATP = alpha-D-galactose 1-phosphate + ADP + H(+). It functions in the pathway carbohydrate metabolism; galactose metabolism. In terms of biological role, catalyzes the transfer of the gamma-phosphate of ATP to D-galactose to form alpha-D-galactose-1-phosphate (Gal-1-P). This is Galactokinase from Cronobacter sakazakii (strain ATCC BAA-894) (Enterobacter sakazakii).